Here is a 223-residue protein sequence, read N- to C-terminus: Coiled-coil domain-containing protein 124 (223 aa).

The tract at residues 1–126 (MPKKFQGENT…AEKAKSHLEV (126 aa)) is disordered. Composition is skewed to basic and acidic residues over residues 18-74 (RRAE…QRLL) and 99-126 (QIED…HLEV). Positions 44 to 82 (KHVMRKEQRKEEKEKRRLDQLERKKETQRLLEEEDSKLK) form a coiled coil. 2 positions are modified to phosphoserine: serine 141 and serine 194. Positions 204–223 (WLRSPDNPMNQRAVPFNAPK) are disordered.

This sequence belongs to the CCDC124 family. Associates with translationally inactive ribosomes in the nonrotated state. Interacts with RASGEF1B.

Its subcellular location is the cytoplasm. The protein localises to the cytoskeleton. It is found in the microtubule organizing center. The protein resides in the centrosome. It localises to the midbody. Its function is as follows. Ribosome-binding protein involved in ribosome hibernation: associates with translationally inactive ribosomes and stabilizes the nonrotated conformation of the 80S ribosome, thereby promoting ribosome preservation and storage. Also required for proper progression of late cytokinetic stages. This is Coiled-coil domain-containing protein 124 (CCDC124) from Pongo abelii (Sumatran orangutan).